A 90-amino-acid chain; its full sequence is Barrier-to-autointegration factor A (90 aa).

It belongs to the BAF family. As to quaternary structure, homodimer. Interacts with nemp1a and nemp1b. Phosphorylated during S and M phases.

It is found in the nucleus. The protein resides in the chromosome. The protein localises to the nucleus envelope. Its subcellular location is the cytoplasm. Functionally, non-specific DNA-binding protein that plays key roles in mitotic nuclear reassembly, chromatin organization, DNA damage response, gene expression and intrinsic immunity against foreign DNA. Contains two non-specific double-stranded DNA (dsDNA)-binding sites which promote DNA cross-bridging. Plays a key role in nuclear membrane reformation at the end of mitosis by driving formation of a single nucleus in a spindle-independent manner. Transiently cross-bridges anaphase chromosomes via its ability to bridge distant DNA sites, leading to the formation of a dense chromatin network at the chromosome ensemble surface that limits membranes to the surface. Also acts as a negative regulator of innate immune activation by restricting CGAS activity toward self-DNA upon acute loss of nuclear membrane integrity. Outcompetes CGAS for DNA-binding, thereby preventing CGAS activation and subsequent damaging autoinflammatory responses. Also involved in DNA damage response; acts by inhibiting the ADP-ribosyltransferase activity of PARP1. Involved in the recognition of exogenous dsDNA in the cytosol: associates with exogenous dsDNA immediately after its appearance in the cytosol at endosome breakdown and is required to avoid autophagy. The chain is Barrier-to-autointegration factor A (banf1-a) from Xenopus laevis (African clawed frog).